Here is a 387-residue protein sequence, read N- to C-terminus: Zn(2)-C6 fungal-type trascription factor aoiH (387 aa).

The segment at residues 21 to 48 (CDFCALSKVKCDRGQPQCVRCIKSGIDC) is a DNA-binding region (zn(2)-C6 fungal-type). Residues 68-87 (VRSTSATTQGTRRKQQTIAQ) show a composition bias toward polar residues. The segment at 68–94 (VRSTSATTQGTRRKQQTIAQHSPRRRI) is disordered.

It localises to the nucleus. In terms of biological role, transcription factor; part of the gene cluster that mediates the biosynthesis of a methylated derivative of known natural products orthosporin and diaporthin. Positively regultaes the expression of the non-reducing polyketide synthase aoiG and the O-methyltransferase aoiO. This is Zn(2)-C6 fungal-type trascription factor aoiH from Aspergillus oryzae (strain ATCC 42149 / RIB 40) (Yellow koji mold).